A 721-amino-acid polypeptide reads, in one-letter code: Putative cullin-like protein 1 (721 aa).

Residues 651-713 (DRRYAIDAAL…RDYLERDTEN (63 aa)) enclose the Cullin neddylation domain.

This sequence belongs to the cullin family.

In Arabidopsis thaliana (Mouse-ear cress), this protein is Putative cullin-like protein 1.